A 58-amino-acid polypeptide reads, in one-letter code: Small ribosomal subunit protein bS21 (58 aa).

Positions 24-58 are disordered; it reads TKAGTLQEARKREHYEKPSVKRKRKSEAARKRKKI. Residues 31 to 42 are compositionally biased toward basic and acidic residues; sequence EARKREHYEKPS. Over residues 43-58 the composition is skewed to basic residues; sequence VKRKRKSEAARKRKKI.

The protein belongs to the bacterial ribosomal protein bS21 family.

The sequence is that of Small ribosomal subunit protein bS21 from Streptococcus thermophilus (strain CNRZ 1066).